Here is a 106-residue protein sequence, read N- to C-terminus: Small ribosomal subunit protein uS10 (106 aa).

The protein belongs to the universal ribosomal protein uS10 family. Part of the 30S ribosomal subunit.

Involved in the binding of tRNA to the ribosomes. The chain is Small ribosomal subunit protein uS10 from Synechococcus sp. (strain CC9605).